Here is a 117-residue protein sequence, read N- to C-terminus: Putative phosphotransferase enzyme IIB component MG129 (117 aa).

The chain crosses the membrane as a helical span at residues 1–21 (MKWLLWLGYIFSFGLLYLWIV). One can recognise a PTS EIIB type-1 domain in the interval 42–117 (PFKVKDFVSA…ELKKKIEDEQ (76 aa)).

The protein resides in the membrane. Its function is as follows. The phosphoenolpyruvate-dependent sugar phosphotransferase system (PTS), a major carbohydrate active -transport system, catalyzes the phosphorylation of incoming sugar substrates concomitant with their translocation across the cell membrane. This is Putative phosphotransferase enzyme IIB component MG129 from Mycoplasma genitalium (strain ATCC 33530 / DSM 19775 / NCTC 10195 / G37) (Mycoplasmoides genitalium).